The chain runs to 220 residues: UPF0319 protein YccT (220 aa).

The signal sequence occupies residues 1-20 (MKAGTLTLLIALCLPISVSA).

The protein belongs to the UPF0319 family.

The protein is UPF0319 protein YccT of Escherichia fergusonii (strain ATCC 35469 / DSM 13698 / CCUG 18766 / IAM 14443 / JCM 21226 / LMG 7866 / NBRC 102419 / NCTC 12128 / CDC 0568-73).